The primary structure comprises 626 residues: Serine/threonine-protein kinase PknH (626 aa).

Residues 1–403 are Cytoplasmic-facing; the sequence is MSDAQDSRVG…QTPRKTNPWP (403 aa). In terms of domain architecture, Protein kinase spans 16–276; it reads YHLKRLLGRG…DLALAAHEAL (261 aa). ATP-binding positions include 22-30 and Lys45; that span reads LGRGGMGEV. Asp139 (proton acceptor) is an active-site residue. At Thr170 the chain carries Phosphothreonine. The disordered stretch occupies residues 292 to 396; it reads QESTLPAPPK…GGPSPWAQTP (105 aa). Composition is skewed to pro residues over residues 297–308 and 316–342; these read PAPPKPVPPPTM and RQPP…PAQP. Over residues 343–355 the composition is skewed to low complexity; the sequence is GPAGQRPGPTGQP. The helical transmembrane segment at 404–424 threads the bilayer; sequence LVAGAAAVVLVLVLGAIGIWI. The Extracellular segment spans residues 425-626; sequence AIRPKPVQPP…AKIVDKVNKE (202 aa). Cystine bridges form between Cys482/Cys545 and Cys587/Cys604.

Belongs to the protein kinase superfamily. Ser/Thr protein kinase family. A divalent metal cation is required as a cofactor. Post-translationally, autophosphorylated on threonine and serine residues. Dephosphorylated by PstP.

It is found in the cell membrane. It carries out the reaction L-seryl-[protein] + ATP = O-phospho-L-seryl-[protein] + ADP + H(+). The enzyme catalyses L-threonyl-[protein] + ATP = O-phospho-L-threonyl-[protein] + ADP + H(+). Inhibited by the kinase inhibitors staurosporine and H-7. Its function is as follows. May regulate bacterial growth in response to external signals to facilitate adaptation to the host environment. In vitro, phosphorylates several substrates such as EmbR, DevR (DosR), DacB1 and Rv0681. This chain is Serine/threonine-protein kinase PknH (pknH), found in Mycobacterium tuberculosis (strain ATCC 25618 / H37Rv).